Reading from the N-terminus, the 171-residue chain is ATP synthase subunit b (171 aa).

A helical transmembrane segment spans residues 2–22; sequence FLVKMVLGFLILLSPLCATGL.

The protein belongs to the ATPase B chain family. F-type ATPases have 2 components, F(1) - the catalytic core - and F(0) - the membrane proton channel. F(1) has five subunits: alpha(3), beta(3), gamma(1), delta(1), epsilon(1). F(0) has three main subunits: a(1), b(2) and c(10-14). The alpha and beta chains form an alternating ring which encloses part of the gamma chain. F(1) is attached to F(0) by a central stalk formed by the gamma and epsilon chains, while a peripheral stalk is formed by the delta and b chains.

The protein resides in the cell inner membrane. Functionally, f(1)F(0) ATP synthase produces ATP from ADP in the presence of a proton or sodium gradient. F-type ATPases consist of two structural domains, F(1) containing the extramembraneous catalytic core and F(0) containing the membrane proton channel, linked together by a central stalk and a peripheral stalk. During catalysis, ATP synthesis in the catalytic domain of F(1) is coupled via a rotary mechanism of the central stalk subunits to proton translocation. Component of the F(0) channel, it forms part of the peripheral stalk, linking F(1) to F(0). This Helicobacter pylori (strain HPAG1) protein is ATP synthase subunit b.